Here is a 158-residue protein sequence, read N- to C-terminus: Transcriptional regulator MraZ (158 aa).

SpoVT-AbrB domains follow at residues 7–66 (KEQH…EPSV) and 95–138 (LDCV…APEK).

This sequence belongs to the MraZ family. Forms oligomers.

It is found in the cytoplasm. The protein localises to the nucleoid. The sequence is that of Transcriptional regulator MraZ from Prosthecochloris aestuarii (strain DSM 271 / SK 413).